The chain runs to 799 residues: Protein phosphatase 1 regulatory subunit 3F (799 aa).

The tract at residues 1–30 (MARTAPVEPPLRHPAPPSPAAGEPRASAEA) is disordered. At 1–772 (MARTAPVEPP…LTQTLGVLAG (772 aa)) the chain is on the cytoplasmic side. Pro residues predominate over residues 7–19 (VEPPLRHPAPPSP). The residue at position 18 (Ser-18) is a Phosphoserine. Over residues 20–30 (AAGEPRASAEA) the composition is skewed to low complexity. The PP1-binding motif signature appears at 36–39 (RVLF). 4 disordered regions span residues 53-108 (RYRP…PVPA), 201-235 (SPPG…SPDD), 332-353 (RRRP…LAEH), and 417-439 (ATCG…DRAA). Residues 78–97 (ADEEDDGEDGDEGEEEEEAF) show a composition bias toward acidic residues. One can recognise a CBM21 domain in the interval 127-283 (LERLGRVMVE…NNHGRNYTVL (157 aa)). Residues 334–353 (RPFEEEPRMRSADDNTLAEH) show a composition bias toward basic and acidic residues. Phosphoserine is present on Ser-545. Disordered stretches follow at residues 566-600 (KDTE…PPEI), 663-688 (SKSP…SWVP), and 722-743 (PHVN…KRSP). Acidic residues predominate over residues 569–579 (EDPDDEGEGED). The segment covering 585–594 (PSSPEGGSPK) has biased composition (low complexity). A phosphoserine mark is found at Ser-587 and Ser-592. The span at 679–688 (PTERESSWVP) shows a compositional bias: basic and acidic residues. Residues 773-793 (LVMVPVALNSGVSLLVLVLCL) form a helical membrane-spanning segment. Residues 794–799 (SLAWFS) lie on the Extracellular side of the membrane.

Highly expressed in brain (at protein level).

The protein localises to the membrane. Glycogen-targeting subunit for protein phosphatase 1 (PP1). The chain is Protein phosphatase 1 regulatory subunit 3F (Ppp1r3f) from Mus musculus (Mouse).